The chain runs to 422 residues: Isocitrate dehydrogenase [NADP] (422 aa).

Thr94 contacts NADP(+). D-threo-isocitrate-binding residues include Ser103, Asn105, Arg109, Arg119, and Arg143. Position 310 (Asp310) interacts with Mg(2+). Residues His344–Tyr350, Asn357, Tyr396, and Arg400 contribute to the NADP(+) site.

It belongs to the isocitrate and isopropylmalate dehydrogenases family. Homodimer. Mg(2+) is required as a cofactor. It depends on Mn(2+) as a cofactor.

The catalysed reaction is D-threo-isocitrate + NADP(+) = 2-oxoglutarate + CO2 + NADPH. Its function is as follows. Catalyzes the oxidative decarboxylation of isocitrate to 2-oxoglutarate and carbon dioxide with the concomitant reduction of NADP(+). This Staphylococcus epidermidis (strain ATCC 35984 / DSM 28319 / BCRC 17069 / CCUG 31568 / BM 3577 / RP62A) protein is Isocitrate dehydrogenase [NADP] (icd).